An 88-amino-acid chain; its full sequence is Small ribosomal subunit protein bS16 (88 aa).

It belongs to the bacterial ribosomal protein bS16 family.

This chain is Small ribosomal subunit protein bS16, found in Desulfitobacterium hafniense (strain DSM 10664 / DCB-2).